Reading from the N-terminus, the 473-residue chain is Aspartyl/glutamyl-tRNA(Asn/Gln) amidotransferase subunit B (473 aa).

It belongs to the GatB/GatE family. GatB subfamily. As to quaternary structure, heterotrimer of A, B and C subunits.

The catalysed reaction is L-glutamyl-tRNA(Gln) + L-glutamine + ATP + H2O = L-glutaminyl-tRNA(Gln) + L-glutamate + ADP + phosphate + H(+). It catalyses the reaction L-aspartyl-tRNA(Asn) + L-glutamine + ATP + H2O = L-asparaginyl-tRNA(Asn) + L-glutamate + ADP + phosphate + 2 H(+). Its function is as follows. Allows the formation of correctly charged Asn-tRNA(Asn) or Gln-tRNA(Gln) through the transamidation of misacylated Asp-tRNA(Asn) or Glu-tRNA(Gln) in organisms which lack either or both of asparaginyl-tRNA or glutaminyl-tRNA synthetases. The reaction takes place in the presence of glutamine and ATP through an activated phospho-Asp-tRNA(Asn) or phospho-Glu-tRNA(Gln). This Francisella tularensis subsp. mediasiatica (strain FSC147) protein is Aspartyl/glutamyl-tRNA(Asn/Gln) amidotransferase subunit B.